A 126-amino-acid chain; its full sequence is Spermidine export protein MdtJ (126 aa).

The next 4 helical transmembrane spans lie at 1–21 (MMIY…GTLS), 32–52 (TGHI…ALAV), 55–75 (VALG…ITVF), and 82–102 (ESLS…IMLV). The tract at residues 104-126 (SGTRKPKKPNSPNRNSGEHHATA) is disordered.

It belongs to the drug/metabolite transporter (DMT) superfamily. Small multidrug resistance (SMR) (TC 2.A.7.1) family. MdtJ subfamily. As to quaternary structure, forms a complex with MdtI.

Its subcellular location is the cell inner membrane. In terms of biological role, catalyzes the excretion of spermidine. The chain is Spermidine export protein MdtJ from Yersinia enterocolitica serotype O:8 / biotype 1B (strain NCTC 13174 / 8081).